The primary structure comprises 150 residues: MWKEFKEFAMKGNVIDLAVGVIIGGAFGKIVTSLVNDVIMPLVGLLLGQMDFSNAFITLGKGDFATIAEAQAAKVPTLNYGLFINNVVDFLIIAFTIFIVIKQINRFNRKKEVKEEVAEEKATKPCPYCYVEIHKEATRCPHCTSVLESP.

Helical transmembrane passes span 14–34 (VIDLAVGVIIGGAFGKIVTSL) and 81–101 (GLFINNVVDFLIIAFTIFIVI).

It belongs to the MscL family. As to quaternary structure, homopentamer.

The protein resides in the cell membrane. Channel that opens in response to stretch forces in the membrane lipid bilayer. May participate in the regulation of osmotic pressure changes within the cell. The polypeptide is Large-conductance mechanosensitive channel (Desulfitobacterium hafniense (strain DSM 10664 / DCB-2)).